The sequence spans 130 residues: Small ribosomal subunit protein uS9 (130 aa).

Belongs to the universal ribosomal protein uS9 family.

This chain is Small ribosomal subunit protein uS9, found in Aliivibrio salmonicida (strain LFI1238) (Vibrio salmonicida (strain LFI1238)).